We begin with the raw amino-acid sequence, 183 residues long: Adenine phosphoribosyltransferase (183 aa).

The protein belongs to the purine/pyrimidine phosphoribosyltransferase family. As to quaternary structure, homodimer.

The protein localises to the cytoplasm. It carries out the reaction AMP + diphosphate = 5-phospho-alpha-D-ribose 1-diphosphate + adenine. It functions in the pathway purine metabolism; AMP biosynthesis via salvage pathway; AMP from adenine: step 1/1. Its function is as follows. Catalyzes a salvage reaction resulting in the formation of AMP, that is energically less costly than de novo synthesis. The polypeptide is Adenine phosphoribosyltransferase (Shewanella pealeana (strain ATCC 700345 / ANG-SQ1)).